We begin with the raw amino-acid sequence, 215 residues long: Nascent polypeptide-associated complex subunit alpha (215 aa).

A disordered region spans residues 1-81 (MPGEATDTVP…SEKKARKAMS (81 aa)). Residues 9–28 (VPATEQELPQPQAETGSGTE) show a composition bias toward polar residues. Over residues 29-42 (SDSDESVPELEEQD) the composition is skewed to acidic residues. Position 43 is a phosphoserine; by ILK1 (S43). Over residues 44–57 (TQATTQQAQLAAAA) the composition is skewed to low complexity. The required for DNA-binding stretch occupies residues 69–80 (QSRSEKKARKAM). Positions 70–135 (SRSEKKARKA…AKIEDLSQQA (66 aa)) constitute an NAC-A/B domain. The tract at residues 93-108 (RVTIRKSKNILFVITK) is RNA/DNA-binding. S132 bears the Phosphoserine mark. K142 bears the N6-acetyllysine; alternate mark. A Glycyl lysine isopeptide (Lys-Gly) (interchain with G-Cter in SUMO2); alternate cross-link involves residue K142. T159 is modified (phosphothreonine; by GSK3-beta). T161 bears the Phosphothreonine mark. Residues S166, S186, S191, and S203 each carry the phosphoserine modification. The 38-residue stretch at 176–213 (VEVKDIELVMSQANVSRAKAVRALKNNSNDIVNAIMEL) folds into the UBA domain.

Belongs to the NAC-alpha family. Part of the nascent polypeptide-associated complex (NAC), which is a heterodimer of NACA and BTF3 (via NAC-A/B domains). NAC associates with ribosomes through the BTF3/NACB subunit and contacts the ribosomal protein L23, which is positioned near the exiting site. Both subunits can contact nascent polypeptide chains. NACA may also form homodimers, and only this form binds DNA. Interacts with TBP and JUN. In terms of processing, phosphorylation of Ser-43 by ILK during cell adhesion may promote nuclear localization. Phosphorylation of Thr-159 by GSK3B may promote proteasome mediated degradation.

It is found in the cytoplasm. Its subcellular location is the nucleus. Prevents inappropriate targeting of non-secretory polypeptides to the endoplasmic reticulum (ER). Binds to nascent polypeptide chains as they emerge from the ribosome and blocks their interaction with the signal recognition particle (SRP), which normally targets nascent secretory peptides to the ER. Also reduces the inherent affinity of ribosomes for protein translocation sites in the ER membrane (M sites). May act as a specific coactivator for JUN, binding to DNA and stabilizing the interaction of JUN homodimers with target gene promoters. The polypeptide is Nascent polypeptide-associated complex subunit alpha (NACA) (Bos taurus (Bovine)).